The chain runs to 179 residues: Trypsin inhibitor (179 aa).

The residue at position 1 (Gln-1) is a Pyrrolidone carboxylic acid. Disulfide bonds link Cys-40–Cys-85 and Cys-132–Cys-143.

This sequence belongs to the protease inhibitor I3 (leguminous Kunitz-type inhibitor) family. In terms of assembly, heterodimer of an alpha and a beta chain linked by a disulfide bond. In terms of tissue distribution, abundant in dry seeds.

The protein localises to the secreted. Inhibits trypsin, plasmin, human plasma kallikrein, chymotrypsin and factor XIIa activity. The polypeptide is Trypsin inhibitor (Leucaena leucocephala (White popinac)).